The primary structure comprises 120 residues: Succinate dehydrogenase assembly factor 3, mitochondrial (120 aa).

The transit peptide at 1-36 (MSRILMSQLTHPQRVRLLYKTILRLHRGLPAELRAL) directs the protein to the mitochondrion.

The protein belongs to the complex I LYR family. SDHAF3 subfamily. As to quaternary structure, interacts with SdhB within an SdhA-SdhB subcomplex.

The protein resides in the mitochondrion matrix. Functionally, plays an essential role in the assembly of succinate dehydrogenase (SDH), an enzyme complex (also referred to as respiratory complex II) that is a component of both the tricarboxylic acid (TCA) cycle and the mitochondrial electron transport chain, and which couples the oxidation of succinate to fumarate with the reduction of ubiquinone (coenzyme Q) to ubiquinol. Promotes maturation of the iron-sulfur protein subunit SdhB of the SDH catalytic dimer, protecting it from the deleterious effects of oxidants. The chain is Succinate dehydrogenase assembly factor 3, mitochondrial from Drosophila melanogaster (Fruit fly).